The primary structure comprises 80 residues: MKTIILILLILGLGIDAKSLEESKADEEKFLRFIGSVIHGIGHLVHHIGVALGDDQQDNGKFYGYYAEDNGKHWYDTGDQ.

The first 17 residues, 1–17 (MKTIILILLILGLGIDA), serve as a signal peptide directing secretion. Positions 18-29 (KSLEESKADEEK) are excised as a propeptide. Leu52 is subject to Leucine amide. Residues 53–80 (GDDQQDNGKFYGYYAEDNGKHWYDTGDQ) constitute a propeptide that is removed on maturation.

In terms of tissue distribution, pharyngeal tissues and hemocytes.

The protein localises to the secreted. Its function is as follows. Exhibits broad-spectrum antimicrobial activity against both Gram-positive and Gram-negative bacteria. Has potent hemolytic activity. This Styela clava (Sea squirt) protein is Clavaspirin.